The following is a 901-amino-acid chain: Protein translocase subunit SecA (901 aa).

ATP contacts are provided by residues Gln-87, 105–109 (GEGKT), and Asp-512. Residues Cys-885, Cys-887, Cys-896, and His-897 each contribute to the Zn(2+) site.

This sequence belongs to the SecA family. In terms of assembly, monomer and homodimer. Part of the essential Sec protein translocation apparatus which comprises SecA, SecYEG and auxiliary proteins SecDF-YajC and YidC. The cofactor is Zn(2+).

Its subcellular location is the cell inner membrane. It is found in the cytoplasm. The catalysed reaction is ATP + H2O + cellular proteinSide 1 = ADP + phosphate + cellular proteinSide 2.. Functionally, part of the Sec protein translocase complex. Interacts with the SecYEG preprotein conducting channel. Has a central role in coupling the hydrolysis of ATP to the transfer of proteins into and across the cell membrane, serving both as a receptor for the preprotein-SecB complex and as an ATP-driven molecular motor driving the stepwise translocation of polypeptide chains across the membrane. The polypeptide is Protein translocase subunit SecA (Salmonella paratyphi A (strain ATCC 9150 / SARB42)).